Here is a 227-residue protein sequence, read N- to C-terminus: Cytochrome c oxidase subunit 2 (227 aa).

The Mitochondrial intermembrane portion of the chain corresponds to 1–14; sequence MAYPFQLGLQDATS. Residues 15–45 form a helical membrane-spanning segment; sequence PIMEELLHFHDHTLMIVFLISSLVLYIISLM. Topologically, residues 46–59 are mitochondrial matrix; it reads LTTKLTHTSTMDAQ. Residues 60–87 traverse the membrane as a helical segment; sequence EVETVWTILPAIILILIALPSLRILYMM. At 88-227 the chain is on the mitochondrial intermembrane side; sequence DEINNPSLTV…YFETWSAVMV (140 aa). Residues histidine 161, cysteine 196, glutamate 198, cysteine 200, histidine 204, and methionine 207 each contribute to the Cu cation site. Glutamate 198 provides a ligand contact to Mg(2+). Residue tyrosine 218 is modified to Phosphotyrosine.

It belongs to the cytochrome c oxidase subunit 2 family. As to quaternary structure, component of the cytochrome c oxidase (complex IV, CIV), a multisubunit enzyme composed of 14 subunits. The complex is composed of a catalytic core of 3 subunits MT-CO1, MT-CO2 and MT-CO3, encoded in the mitochondrial DNA, and 11 supernumerary subunits COX4I, COX5A, COX5B, COX6A, COX6B, COX6C, COX7A, COX7B, COX7C, COX8 and NDUFA4, which are encoded in the nuclear genome. The complex exists as a monomer or a dimer and forms supercomplexes (SCs) in the inner mitochondrial membrane with NADH-ubiquinone oxidoreductase (complex I, CI) and ubiquinol-cytochrome c oxidoreductase (cytochrome b-c1 complex, complex III, CIII), resulting in different assemblies (supercomplex SCI(1)III(2)IV(1) and megacomplex MCI(2)III(2)IV(2)). Found in a complex with TMEM177, COA6, COX18, COX20, SCO1 and SCO2. Interacts with TMEM177 in a COX20-dependent manner. Interacts with COX20. Interacts with COX16. Requires Cu cation as cofactor.

It localises to the mitochondrion inner membrane. The catalysed reaction is 4 Fe(II)-[cytochrome c] + O2 + 8 H(+)(in) = 4 Fe(III)-[cytochrome c] + 2 H2O + 4 H(+)(out). In terms of biological role, component of the cytochrome c oxidase, the last enzyme in the mitochondrial electron transport chain which drives oxidative phosphorylation. The respiratory chain contains 3 multisubunit complexes succinate dehydrogenase (complex II, CII), ubiquinol-cytochrome c oxidoreductase (cytochrome b-c1 complex, complex III, CIII) and cytochrome c oxidase (complex IV, CIV), that cooperate to transfer electrons derived from NADH and succinate to molecular oxygen, creating an electrochemical gradient over the inner membrane that drives transmembrane transport and the ATP synthase. Cytochrome c oxidase is the component of the respiratory chain that catalyzes the reduction of oxygen to water. Electrons originating from reduced cytochrome c in the intermembrane space (IMS) are transferred via the dinuclear copper A center (CU(A)) of subunit 2 and heme A of subunit 1 to the active site in subunit 1, a binuclear center (BNC) formed by heme A3 and copper B (CU(B)). The BNC reduces molecular oxygen to 2 water molecules using 4 electrons from cytochrome c in the IMS and 4 protons from the mitochondrial matrix. The sequence is that of Cytochrome c oxidase subunit 2 (MT-CO2) from Lycalopex culpaeus (Culpeo fox).